Consider the following 119-residue polypeptide: Large ribosomal subunit protein bL12 (119 aa).

This sequence belongs to the bacterial ribosomal protein bL12 family. As to quaternary structure, homodimer. Part of the ribosomal stalk of the 50S ribosomal subunit. Forms a multimeric L10(L12)X complex, where L10 forms an elongated spine to which 2 to 4 L12 dimers bind in a sequential fashion. Binds GTP-bound translation factors.

Functionally, forms part of the ribosomal stalk which helps the ribosome interact with GTP-bound translation factors. Is thus essential for accurate translation. This Colwellia psychrerythraea (strain 34H / ATCC BAA-681) (Vibrio psychroerythus) protein is Large ribosomal subunit protein bL12.